A 272-amino-acid chain; its full sequence is Undecaprenyl-diphosphatase (272 aa).

Helical transmembrane passes span 22-42, 45-65, 92-112, 118-138, 189-209, 228-248, and 251-271; these read FLPV…GFTG, AETF…VVFW, SHII…HDVI, PQSV…AEIL, YTAS…ASGL, VGFV…LALI, and ISFI…YWVF.

Belongs to the UppP family.

It is found in the cell inner membrane. The enzyme catalyses di-trans,octa-cis-undecaprenyl diphosphate + H2O = di-trans,octa-cis-undecaprenyl phosphate + phosphate + H(+). Catalyzes the dephosphorylation of undecaprenyl diphosphate (UPP). Confers resistance to bacitracin. This chain is Undecaprenyl-diphosphatase, found in Photorhabdus laumondii subsp. laumondii (strain DSM 15139 / CIP 105565 / TT01) (Photorhabdus luminescens subsp. laumondii).